Here is a 290-residue protein sequence, read N- to C-terminus: MSEKLQKVLARAGHGSRREIESIIEAGRVSVDGKIAKLGDRVEVTPGLKIRIDGHLISVRESAEQICRVLAYYKPEGELCTRNDPEGRPTVFDRLPKLRGARWIAVGRLDVNTCGLLLFTTDGELANRLMHPSREVEREYAVRVFGQVDDAKLRDLSRGVQLEDGPAAFKTIKFSGGEGINQWYNVTLTEGRNREVRRLWEAVGVQVSRLIRVRYGDIPLPKGLPRGGWTELDLAQTNYLRELVELPPETSSKVAVEKDRRRMKANQIRRAVKRHSQVSGSRRSGGRNNG.

One can recognise an S4 RNA-binding domain in the interval 3–75 (EKLQKVLARA…ICRVLAYYKP (73 aa)). The active-site Nucleophile is the Asp110. Positions 251–290 (SSKVAVEKDRRRMKANQIRRAVKRHSQVSGSRRSGGRNNG) are disordered.

Belongs to the pseudouridine synthase RsuA family.

The enzyme catalyses uridine(2605) in 23S rRNA = pseudouridine(2605) in 23S rRNA. Its function is as follows. Responsible for synthesis of pseudouridine from uracil-2605 in 23S ribosomal RNA. The chain is Ribosomal large subunit pseudouridine synthase B (rluB) from Shigella flexneri.